We begin with the raw amino-acid sequence, 101 residues long: Ribonuclease kappa-B (101 aa).

The next 2 membrane-spanning stretches (helical) occupy residues 13–33 (ACGI…GVFF) and 68–88 (VSYN…FSFC).

The protein belongs to the RNase K family.

The protein localises to the membrane. In terms of biological role, endoribonuclease which preferentially cleaves ApU and ApG phosphodiester bonds. The sequence is that of Ribonuclease kappa-B (rnasek-b) from Xenopus laevis (African clawed frog).